The chain runs to 428 residues: Histidine--tRNA ligase (428 aa).

This sequence belongs to the class-II aminoacyl-tRNA synthetase family. Homodimer.

The protein localises to the cytoplasm. It carries out the reaction tRNA(His) + L-histidine + ATP = L-histidyl-tRNA(His) + AMP + diphosphate + H(+). This Sorangium cellulosum (strain So ce56) (Polyangium cellulosum (strain So ce56)) protein is Histidine--tRNA ligase.